A 235-amino-acid polypeptide reads, in one-letter code: MKFIFYLSVLTGTFLFADSSVQKEDPAPYLVYLKSHFNPCVGVLIKPSWVLAPAHCYLPNLEVMLGNFKSRVRDGTEQTINPIQIVRYWNYSDSAPQDDLMLIKLAKPAMLNPKVQPLPLATTNVRPGTVCLLSGLDWSQENSGRHPDLRQNLEAPVMSDKECQKTEQGKSHRNSLCVKFVKVFSRIFGEVAVATVICKDKLQGIEVGHFMGGDVGIYTNVYKYVSWIENTAKDK.

The first 19 residues, 1–19 (MKFIFYLSVLTGTFLFADS), serve as a signal peptide directing secretion. The 214-residue stretch at 20–233 (SVQKEDPAPY…YVSWIENTAK (214 aa)) folds into the Peptidase S1 domain. 3 disulfides stabilise this stretch: C40-C56, C131-C198, and C163-C177.

This sequence belongs to the peptidase S1 family.

Its subcellular location is the cytoplasmic vesicle. The protein resides in the secretory vesicle. It is found in the acrosome. The protein localises to the secreted. Its function is as follows. Plays a role in male fertility. May have a role in sperm migration or binding to zona-intact eggs. Involved in the activation of the proacrosin/acrosin system. The polypeptide is Probable inactive serine protease 37 (Macaca fascicularis (Crab-eating macaque)).